A 384-amino-acid polypeptide reads, in one-letter code: Inactive lipoate--protein ligase 2 (384 aa).

In terms of domain architecture, BPL/LPL catalytic spans 79–303 (NESKGNECIF…HIKHIINYKN (225 aa)).

Its subcellular location is the mitochondrion. The protein resides in the plastid. It is found in the apicoplast. In the mitochondrion and together with LipL1, involved in the lipoylation of the E2 component of the branched chain alpha-ketoacid dehydrogenase complex BCKDH-E2/BCDH and the E2 component of the alpha -ketoglutarate dehydrogenase complex KDH. LipL1 is responsible for catalysing the activation of lipoate, forming lipoyl-AMP while LipL2 is required but is not capable of catalyzing this reaction. Although its role is unclear, it may catalyze the transfer of lipoyl groups from lipoyl-AMP to BCDH and KDH or act as an effector protein. The chain is Inactive lipoate--protein ligase 2 from Plasmodium falciparum (isolate 3D7).